Reading from the N-terminus, the 216-residue chain is Hexitol phosphatase A (216 aa).

Residue Asp9 is the Nucleophile of the active site. Positions 9 and 11 each coordinate a divalent metal cation. Substrate contacts are provided by residues 9 to 11 (DLD), 106 to 107 (TS), and Lys138. Asp11 (proton donor) is an active-site residue. Asp163 is an a divalent metal cation binding site.

It belongs to the HAD-like hydrolase superfamily. CbbY/CbbZ/Gph/YieH family. The cofactor is Mg(2+). It depends on Mn(2+) as a cofactor. Co(2+) serves as cofactor.

The catalysed reaction is sugar phosphate + H2O = sugar + phosphate.. It catalyses the reaction D-mannitol 1-phosphate + H2O = D-mannitol + phosphate. The enzyme catalyses D-sorbitol 6-phosphate + H2O = D-sorbitol + phosphate. Its function is as follows. Sugar-phosphate phosphohydrolase that appears to contribute to butanol tolerance. Catalyzes the dephosphorylation of D-mannitol 1-phosphate and D-sorbitol 6-phosphate. Is also able to dephosphorylate other sugar phosphates in vitro including ribose-5-phosphate (Rib5P), 2-deoxyribose-5-phosphate, fructose-1-phosphate (Fru1P), fructose-6-phosphate (Fru6P), and glucose-6-phosphate (Glu6P). Selectively hydrolyzes beta-D-glucose-1-phosphate (bGlu1P) and has no activity with the alpha form. This is Hexitol phosphatase A from Escherichia coli (strain K12).